The following is a 511-amino-acid chain: MASMITVDFENCFIFLLLCLFSRLSYDLFFRKTKDSRAGCALPPSPPSLPIIGHLHLILFVPIHQSFKNISSKYGPLLHLRFFNFPIVLVSSASTAYEIFKAQDVNVSSRPPPPIEESLILGSSSFINTPYGDYSKFMKKFMVQKLLGPQALQRSRNIRADELERFYKTLLDKAMKKQTVEIRNEAMKLTNNTICKMIMGRSCSEENGEAETVRGLVTESIFLTKKHFLGAMFHKPLKKLGISLFAKELMNVSNRFDELLEKILVEHEEKLQEHHQTSDMLDMLLEAYGDENAEYKITRDQIKSLFVDLFSAGTEASANTIQWTMAEIIKNPKICERLREEIDSVVGKTRLVQETDLPNLPYLQAIVKEGLRLHPPGPVVRTFKETCEIKGFYIPEKTRLFVNVYAIMRDPDFWEDPEEFKPERFLASSRLGEEDEKREDMLKYIPFGSGRRACPGSHLAYTVVGSVIGMMVQHFDWIIKGEKINMKEGGTMTLTMAHPLKCTPVPRNLNT.

A helical membrane pass occupies residues 12 to 30 (CFIFLLLCLFSRLSYDLFF). Residue cysteine 454 coordinates heme.

Belongs to the cytochrome P450 family. Requires heme as cofactor. Expressed primarily in the root epidermis.

The protein resides in the membrane. Functionally, converts thalian-diol to a desaturated thalian-diol. This Arabidopsis thaliana (Mouse-ear cress) protein is Cytochrome P450 705A5 (CYP705A5).